Here is a 469-residue protein sequence, read N- to C-terminus: 3-isopropylmalate dehydratase large subunit (469 aa).

Residues Cys347, Cys407, and Cys410 each contribute to the [4Fe-4S] cluster site. Residues 424 to 441 (SASSSNRNFKGRQGSPSG) show a composition bias toward polar residues. The segment at 424–443 (SASSSNRNFKGRQGSPSGRT) is disordered.

The protein belongs to the aconitase/IPM isomerase family. LeuC type 1 subfamily. In terms of assembly, heterodimer of LeuC and LeuD. Requires [4Fe-4S] cluster as cofactor.

The enzyme catalyses (2R,3S)-3-isopropylmalate = (2S)-2-isopropylmalate. It functions in the pathway amino-acid biosynthesis; L-leucine biosynthesis; L-leucine from 3-methyl-2-oxobutanoate: step 2/4. In terms of biological role, catalyzes the isomerization between 2-isopropylmalate and 3-isopropylmalate, via the formation of 2-isopropylmaleate. This Prochlorococcus marinus (strain MIT 9312) protein is 3-isopropylmalate dehydratase large subunit.